The primary structure comprises 601 residues: Elongation factor 4 (601 aa).

Positions 5–187 (EHIRNFSIIA…AIVERLPAPE (183 aa)) constitute a tr-type G domain. Residues 17 to 22 (DHGKST) and 134 to 137 (NKVD) each bind GTP.

This sequence belongs to the TRAFAC class translation factor GTPase superfamily. Classic translation factor GTPase family. LepA subfamily.

The protein localises to the cell inner membrane. The catalysed reaction is GTP + H2O = GDP + phosphate + H(+). Its function is as follows. Required for accurate and efficient protein synthesis under certain stress conditions. May act as a fidelity factor of the translation reaction, by catalyzing a one-codon backward translocation of tRNAs on improperly translocated ribosomes. Back-translocation proceeds from a post-translocation (POST) complex to a pre-translocation (PRE) complex, thus giving elongation factor G a second chance to translocate the tRNAs correctly. Binds to ribosomes in a GTP-dependent manner. This is Elongation factor 4 from Nitratidesulfovibrio vulgaris (strain DSM 19637 / Miyazaki F) (Desulfovibrio vulgaris).